The following is a 505-amino-acid chain: MASIDFRNKINWHRRYRSPQGVKTEHEILRIFESDRGRIINSPAIRRLQQKTQVFPLERNAAVRTRLTHSMEVQQVGRYIAKEILSRLKEQNRLEEYGLDALTGPFESIVEMACLMHDIGNPPFGHFGEAAINDWFRQWLHPEDAESQPLTHDRCVVSSLRLQEGEENLNDIRRKVRQDICHFEGNAQGIRLVHTLMRMNLTWAQVGGILKYTRPAWWRGPVPDSHRYLMKKPGYYLSEEKYIARLRKELQLAPYSRFPLTWIMEAADDISYCVADLEDAVEKRIFSVEQLYHHLYHAWGHHEKDSLFELVVGNAWEKSRANTLSRSTEDQFFMYLRVNTLNKLVSYAAQRFIDNLPQIFAGTFNQALLEDASGFSRLLELYKNVAVEHVFSHPDVEQLELQGYRVISGLLDIYQPLLSLSLNDFRELVEKERLKRFPIESRLFQKLSTRHRLAYVEVVSKLPTDSAEYPVLEYYYRCRLIQDYISGMTDLYAWDEYRRLMAVEQ.

One can recognise an HD domain in the interval 66 to 273 (RLTHSMEVQQ…MEAADDISYC (208 aa)).

It belongs to the dGTPase family. Type 1 subfamily. As to quaternary structure, homotetramer. It depends on Mg(2+) as a cofactor.

The catalysed reaction is dGTP + H2O = 2'-deoxyguanosine + triphosphate + H(+). Its function is as follows. dGTPase preferentially hydrolyzes dGTP over the other canonical NTPs. The protein is Deoxyguanosinetriphosphate triphosphohydrolase of Salmonella paratyphi A (strain AKU_12601).